We begin with the raw amino-acid sequence, 133 residues long: Small ribosomal subunit protein uS8 (133 aa).

Residues 1-28 are disordered; it reads MANHDPISDMLTRIRNASEKRHEKTKVP. A compositionally biased stretch (basic and acidic residues) spans 16–26; the sequence is NASEKRHEKTK.

This sequence belongs to the universal ribosomal protein uS8 family. In terms of assembly, part of the 30S ribosomal subunit. Contacts proteins S5 and S12.

In terms of biological role, one of the primary rRNA binding proteins, it binds directly to 16S rRNA central domain where it helps coordinate assembly of the platform of the 30S subunit. The sequence is that of Small ribosomal subunit protein uS8 from Prochlorococcus marinus (strain NATL2A).